The following is a 188-amino-acid chain: Elongation factor P-like protein (188 aa).

The protein belongs to the elongation factor P family.

This chain is Elongation factor P-like protein, found in Xanthomonas euvesicatoria pv. vesicatoria (strain 85-10) (Xanthomonas campestris pv. vesicatoria).